We begin with the raw amino-acid sequence, 31 residues long: Cyclotide cter-D (31 aa).

The segment at residues 1 to 31 is a cross-link (cyclopeptide (Gly-Asn)); it reads GIPCAESCVWIPCTVTALLGCSCKDKVCYLN. 3 disulfides stabilise this stretch: C4/C21, C8/C23, and C13/C28.

In terms of processing, contains 3 disulfide bonds. Post-translationally, this is a cyclic peptide. In terms of tissue distribution, expressed in root, seed and nodule but not in flower, stem, shoot, leaf and pod.

Functionally, probably participates in a plant defense mechanism. The protein is Cyclotide cter-D of Clitoria ternatea (Butterfly pea).